Consider the following 67-residue polypeptide: Ayadualin (67 aa).

The signal sequence occupies residues 1-20; the sequence is MNKIILFSAVFLALVFCAEA. Positions 35 to 54 are enriched in acidic residues; that stretch reads PDDTVDIDEGLPDAFDEDYE. The interval 35–67 is disordered; it reads PDDTVDIDEGLPDAFDEDYEQDGHNPYPCRGDC. The Integrin-binding motif motif lies at 64–66; the sequence is RGD.

Salivary gland.

Its subcellular location is the secreted. Inhibits collagen- and ADP-induced host platelet aggregation by blocking the binding of host integrin alpha-IIb/beta-3 (ITGA2B/ITGB3) to fibrinogen. Inhibits the intrinsic blood coagulation pathway in the host by blocking the activity of host coagulation factor XIIa (F12). The protein is Ayadualin of Lutzomyia ayacuchensis (Sand fly).